Consider the following 371-residue polypeptide: uncharacterized protein (371 aa).

The region spanning 43-148 is the EH domain; sequence DESRVPKFYL…VQAFPTASNP (106 aa). The disordered stretch occupies residues 179 to 205; it reads SMRKKKESDSKEVSAHNSPAKGAAHDL.

This is an uncharacterized protein from Caenorhabditis elegans.